We begin with the raw amino-acid sequence, 626 residues long: Fructose-1,6-bisphosphatase class 3 (626 aa).

This sequence belongs to the FBPase class 3 family. The cofactor is Mn(2+).

The enzyme catalyses beta-D-fructose 1,6-bisphosphate + H2O = beta-D-fructose 6-phosphate + phosphate. Its pathway is carbohydrate biosynthesis; gluconeogenesis. This is Fructose-1,6-bisphosphatase class 3 from Enterococcus faecalis (strain ATCC 700802 / V583).